Reading from the N-terminus, the 340-residue chain is HTH-type transcriptional regulator VirS (340 aa).

The region spanning 236 to 334 (ERVVGLARRL…GMTPRQYRAY (99 aa)) is the HTH araC/xylS-type domain. DNA-binding regions (H-T-H motif) lie at residues 254–275 (EAIA…AAEG) and 301–324 (LSQI…RRWF).

Phosphorylated by PknK. Phosphorylation increases affinity for the mymA promoter.

Regulates the expression of the mymA operon. In Mycobacterium tuberculosis (strain CDC 1551 / Oshkosh), this protein is HTH-type transcriptional regulator VirS (virS).